The primary structure comprises 1060 residues: MTSQEKVPLQVQLSLPQILSRRDWENPQITQYHRLEAHPPFHSWRDVESAQKDRPSPQQQTLNGLWSFSYFTQPEAVPEHWVRCDLAEAKPLPVPANWQLHGYDAPIYTNIQYPIPVNPPRVPDLNPTGCYSRDFTLEPSWLASGKTRIIFDGVSSAFYLWCNGQWVGYSQDSRLPAEFDLTPYLQAGSNRIAVLVLRWSDGSYLEDQDMWRMSGIFRDVKLLHKPEIHLRDIHIMTHLSPEFTSANLEVMAAVNIPSLQLNDPQVTGSYQLRVQLWLADKLVASLQQPLGTQAIDERGPYTDRTQLVLRIDQPLLWSAEQPTLYRAVVSLLNHQQELIEAEAYDVGFRQVAIHQGLLKINGKAVLIRGVNRHEHHPQTGQAIDEESLLQDILLMKQHNFNAVRCSHYPNHPLWYRLCDRYGLYVVDEANIETHGMQPMSRLSDDPSWFSAFSERVTRMVQRDRNHPCIIIWSLGNESGHGATHDALYRWIKTNDPTRPVQYEGGGANTLATDILCPMYARVDEDQPFPAVPKWSIKKWIGLPNESRPLILCEYAHAMGNSFGGFARYWQAFRQYPRLQGGFIWDWVDQSLTHHNDHGQPYWAYGGDFGDTPNDRQFCMNGLVFPDRSPHPSLYEAQCAQQFFQFSLLSTTPLVINITSEYLFRESDNEQLYWRIMLEGESVLEGSQPLNLSPESSQCYRLAEKLPTLNKPGQLWLNVEIRQPKETPWSPAQHRSAWHQWRLPQPLFSPSSDLTNATAHYAPQLQHNLQLQHDLQLQQDEQHIKVTYQQQCWQFSRQTGRLAQWWVADKPMLLRPLQDQFVRAPLDNDIGISEATHIDPNAWVERWKKAGMYQLQQRCLSLHVDHLSHSVQISAEYGYEFEQEPLLHSHWVYRFDRHGRMTIDVNVRIATSLPAPARIGMCCQLADISPTVEWLGLGPHENYPDRQLAAQYGHWSLPLEQMHTAYIFPSENGLRCNTHTLNYGRWTLTGDFHFGISRYSTQQLMVTSHQHLLEPEEGTWLNIDGFHMGVGGDDSWSPSVHIDDILTRETYQYQICWQYKV.

Substrate is bound by residues asparagine 110 and aspartate 209. Aspartate 209 contributes to the Na(+) binding site. Residues glutamate 432, histidine 434, and glutamate 477 each contribute to the Mg(2+) site. Substrate is bound by residues glutamate 477 and 553-556; that span reads EYAH. The active-site Proton donor is glutamate 477. The active-site Nucleophile is glutamate 553. Asparagine 613 is a Mg(2+) binding site. Phenylalanine 617 and asparagine 620 together coordinate Na(+). Asparagine 620 and tryptophan 1035 together coordinate substrate.

This sequence belongs to the glycosyl hydrolase 2 family. Homotetramer. Mg(2+) serves as cofactor. Requires Na(+) as cofactor.

The enzyme catalyses Hydrolysis of terminal non-reducing beta-D-galactose residues in beta-D-galactosides.. The chain is Beta-galactosidase from Yersinia pestis bv. Antiqua (strain Antiqua).